The following is a 309-amino-acid chain: Hydroxyacylglutathione hydrolase, mitochondrial (309 aa).

A mitochondrion-targeting transit peptide spans Met-1–Gly-24. Residue Lys-90 is modified to N6-acetyllysine. Zn(2+) contacts are provided by His-103, His-105, Asp-107, and His-108. Lys-117 carries the N6-acetyllysine modification. 2 residues coordinate Zn(2+): His-159 and Asp-183. Residues Lys-192–Tyr-194 and His-222–Tyr-224 each bind substrate. His-222 is a binding site for Zn(2+). Lys-230 is subject to N6-acetyllysine; alternate. Residue Lys-230 is modified to N6-succinyllysine; alternate. Arg-298–Lys-301 contributes to the substrate binding site.

It belongs to the metallo-beta-lactamase superfamily. Glyoxalase II family. As to quaternary structure, monomer. Requires Zn(2+) as cofactor. In terms of tissue distribution, strongly expressed in testis, skeletal muscle and heart. Weakly expressed in placenta, pancreas, spleen and peripheral blood leukocytes.

The protein resides in the mitochondrion matrix. It localises to the cytoplasm. The enzyme catalyses an S-(2-hydroxyacyl)glutathione + H2O = a 2-hydroxy carboxylate + glutathione + H(+). It carries out the reaction (R)-S-lactoylglutathione + H2O = (R)-lactate + glutathione + H(+). It functions in the pathway secondary metabolite metabolism; methylglyoxal degradation; (R)-lactate from methylglyoxal: step 2/2. Thiolesterase that catalyzes the hydrolysis of S-D-lactoyl-glutathione to form glutathione and D-lactic acid. In Rattus norvegicus (Rat), this protein is Hydroxyacylglutathione hydrolase, mitochondrial (Hagh).